A 50-amino-acid chain; its full sequence is MKAIMVLFYVMTLTIIGSFSMVSGSPGQNDYVNPKLQFACDLLQKAKERQ.

An N-terminal signal peptide occupies residues 1–26 (MKAIMVLFYVMTLTIIGSFSMVSGSP).

In terms of assembly, dimer; disulfide-linked. As to expression, expressed in venom sac and, to a lesser extent, in venom gland. Not expressed in brain.

The protein localises to the secreted. Amphipathic peptide which probably adopts an alpha-helical structure. Has no antimicrobial activity against E.coli DH5alpha or B.thuringiensis. Is not cytotoxic in vitro. The sequence is that of Ampulexin 2 from Ampulex compressa (Emerald cockroach wasp).